The sequence spans 493 residues: Dipeptidase 3 (493 aa).

The signal sequence occupies residues 1–35 (MQPAGLEGPRALGLRPLGHRLSLLGVLLLVPSLWV). Over residues 41-60 (TPSPSSAPTTPEASNATTAP) the composition is skewed to low complexity. Residues 41 to 74 (TPSPSSAPTTPEASNATTAPGIPNDTATSGVTSD) form a disordered region. 2 cysteine pairs are disulfide-bonded: cysteine 143-cysteine 222 and cysteine 294-cysteine 326. N-linked (GlcNAc...) asparagine glycosylation occurs at asparagine 331. Serine 462 is lipidated: GPI-anchor amidated serine. Positions 463–493 (KAPPHPLPGLMATLTSLALILWLCCSGHRAV) are cleaved as a propeptide — removed in mature form.

This sequence belongs to the metallo-dependent hydrolases superfamily. Peptidase M19 family. As to quaternary structure, homodimer; disulfide-linked. Interacts with TEX101; co-localized on the cell surface of spermatocytes, spermatids, and testicular spermatozoa, co-localized only in cytoplasmic droplets of caput and corpus epididymal sperm. As to expression, expressed in testis but not ovary.

It is found in the membrane. Lacks dipeptidase activity and is unable to hydrolyze cystinyl-bis-glycine. The absence of activity may be due to the inability of serine (instead of aspartate found in DPEP1/2) at position 356 to function as the acid/base catalyst and activate the nucleophilic water/hydroxide. Does not hydrolyze leukotriene D4 (LTD4) into leukotriene E4 (LTE4). Does not hydrolyze the beta-lactam antibiotic imipenem. The chain is Dipeptidase 3 (Dpep3) from Mus musculus (Mouse).